The chain runs to 337 residues: Mitochondrial glutathione transporter SLC25A40 (337 aa).

Solcar repeat units lie at residues 14 to 132 (VTPL…LSAF), 140 to 224 (NETR…LKRW), and 234 to 328 (PTFM…GKSF). 6 consecutive transmembrane segments (helical) span residues 20–40 (MIAS…LDVV), 104–124 (LWSG…IYFT), 146–166 (IVAG…LELI), 200–221 (WAPT…YENL), 240–260 (FTSG…FDVV), and 299–319 (GLFT…AIMI).

The protein belongs to the mitochondrial carrier (TC 2.A.29) family.

It is found in the mitochondrion inner membrane. It carries out the reaction glutathione(in) = glutathione(out). Probable mitochondrial transporter required for glutathione import into mitochondria. Glutathione, which plays key roles in oxidative metabolism, is produced exclusively in the cytosol and is imported in many organelles. Mitochondrial glutathione is required for the activity and stability of proteins containing iron-sulfur clusters, as well as erythropoiesis. This Mus musculus (Mouse) protein is Mitochondrial glutathione transporter SLC25A40.